Consider the following 752-residue polypeptide: Iron-sulfur clusters transporter ABCB7, mitochondrial (752 aa).

The N-terminal 22 residues, 1–22 (MALLAIHSWRWAAAAVAFEKHK), are a transit peptide targeting the mitochondrion. Residues 23–140 (HSAVLTRSLV…KDRPDLRARV (118 aa)) are Mitochondrial matrix-facing. The 297-residue stretch at 140-436 (VAISLGFLGG…LGTVYRETRQ (297 aa)) folds into the ABC transmembrane type-1 domain. Residues 141-161 (AISLGFLGGAKAMNIVVPFMF) traverse the membrane as a helical segment. Topologically, residues 162 to 185 (KYAVDSLNQMSGNMLNLSDAPNTV) are mitochondrial intermembrane. A helical transmembrane segment spans residues 186-206 (ATMATAVLIGYGVSRAGAAFF). The Mitochondrial matrix segment spans residues 207–259 (NEVRNAVFGKVAQNSIRRIAKNVFLHLHNLDLGFHLSRQTGALSKAIDRGTRG). An N6-acetyllysine mark is found at Lys-216 and Lys-251. Residues 260–280 (ISFVLSALVFNLLPIVFEMTL) traverse the membrane as a helical segment. Residues 281–290 (VSSVLYYKCG) lie on the Mitochondrial intermembrane side of the membrane. The helical transmembrane segment at 291–311 (AQFALVTLGTLGAYTAFTVAV) threads the bilayer. Topologically, residues 312 to 382 (TRWRTRFRIE…TLAMLNFGQS (71 aa)) are mitochondrial matrix. A glutathione-binding site is contributed by 315-319 (RTRFR). Ser-336 is subject to Phosphoserine. Tyr-340 carries the post-translational modification Phosphotyrosine. Thr-342 carries the post-translational modification Phosphothreonine. Lys-350 is subject to N6-acetyllysine. Residue 378-381 (NFGQ) coordinates glutathione. Residues 383-403 (AIFSVGLTAIMVLASQGIVAG) traverse the membrane as a helical segment. Over 404-409 (ALTVGD) the chain is Mitochondrial intermembrane. A helical transmembrane segment spans residues 410-430 (LVMVNGLLFQLSLPLNFLGTV). Gly-428 serves as a coordination point for glutathione. The Mitochondrial matrix segment spans residues 431 to 752 (YRETRQALID…SVKGCGNCSC (322 aa)). One can recognise an ABC transporter domain in the interval 472 to 706 (VAFDNVHFEY…SSSIYSEMWH (235 aa)). Residues Tyr-481 and 505–516 (GGSGSGKSTIVR) contribute to the ATP site.

Belongs to the ABC transporter superfamily. ABCB family. Heavy Metal importer (TC 3.A.1.210) subfamily. As to quaternary structure, homodimer or heterodimer. Interacts with C10orf88/PAAT. Forms a complex with ABCB10 and FECH, where a dimeric FECH bridges ABCB7 and ABCB10 homodimers; this complex may be required for cellular iron homeostasis, mitochondrial function and heme biosynthesis. Interacts with FECH. Interacts with ATP5F1A. Interacts with COX4I1; this interaction allows the regulation of cellular iron homeostasis and cellular reactive oxygen species (ROS) levels in cardiomyocytes.

It localises to the mitochondrion inner membrane. It carries out the reaction (glutathione)4[2Fe(III)-2S] cluster(in) + ATP + H2O = (glutathione)4[2Fe(III)-2S] cluster(out) + ADP + phosphate + H(+). Functionally, exports glutathione-coordinated iron-sulfur clusters such as [2Fe-2S]-(GS)4 cluster from the mitochondria to the cytosol in an ATP-dependent manner allowing the assembly of the cytosolic iron-sulfur (Fe/S) cluster-containing proteins and participates in iron homeostasis. Moreover, through a functional complex formed of ABCB7, FECH and ABCB10, also plays a role in the cellular iron homeostasis, mitochondrial function and heme biosynthesis. In cardiomyocytes, regulates cellular iron homeostasis and cellular reactive oxygen species (ROS) levels through its interaction with COX4I1. May also play a role in hematopoiesis. This is Iron-sulfur clusters transporter ABCB7, mitochondrial from Rattus norvegicus (Rat).